A 109-amino-acid polypeptide reads, in one-letter code: Parvalbumin alpha (109 aa).

S1 is subject to N-acetylserine. 2 consecutive EF-hand domains span residues 38–73 and 77–109; these read KSDA…FSDG and LNDK…AKMT. The Ca(2+) site is built by D51, D53, S55, Y57, E59, E62, D90, D92, D94, K96, and E101.

Belongs to the parvalbumin family. In terms of assembly, monomer.

Functionally, in muscle, parvalbumin is thought to be involved in relaxation after contraction. It binds two calcium ions. The protein is Parvalbumin alpha of Raja clavata (Thornback ray).